A 370-amino-acid chain; its full sequence is 3-isopropylmalate dehydrogenase (370 aa).

An NAD(+)-binding site is contributed by 77–90 (GPKWDSVPYEVRPE). 4 residues coordinate substrate: R97, R107, R135, and D226. D226, D250, and D254 together coordinate Mg(2+). 290–302 (GSAPDIAGQGLAN) contacts NAD(+).

Belongs to the isocitrate and isopropylmalate dehydrogenases family. LeuB type 1 subfamily. Homodimer. It depends on Mg(2+) as a cofactor. Mn(2+) serves as cofactor.

The protein resides in the cytoplasm. The enzyme catalyses (2R,3S)-3-isopropylmalate + NAD(+) = 4-methyl-2-oxopentanoate + CO2 + NADH. It participates in amino-acid biosynthesis; L-leucine biosynthesis; L-leucine from 3-methyl-2-oxobutanoate: step 3/4. In terms of biological role, catalyzes the oxidation of 3-carboxy-2-hydroxy-4-methylpentanoate (3-isopropylmalate) to 3-carboxy-4-methyl-2-oxopentanoate. The product decarboxylates to 4-methyl-2 oxopentanoate. The protein is 3-isopropylmalate dehydrogenase of Nitrobacter winogradskyi (strain ATCC 25391 / DSM 10237 / CIP 104748 / NCIMB 11846 / Nb-255).